The chain runs to 116 residues: MIEELGKIDRIIQESVPGKQITLAHVIAAPIEAVYECLGVDHEGAIGVVSLTPNETAIIAADIAGKAANIDICFVDRFTGSVMFSGDIQSVETSLEDILEYFKNSLGFSTVPLTKS.

The region spanning 10 to 108 (RIIQESVPGK…LEYFKNSLGF (99 aa)) is the BMC circularly permuted domain.

This sequence belongs to the EutS/PduU family. Has been crystallized in 5 structures (all are mutated, 3 have an N-terminal His-tag), most are homohexameric with a central pore. In two the homohexamer lies flat with a beta-barrel on the flat face created by the protruding N termini of the six chains. In 2 others the hexamer is not flat but has a six-fold screw axis; the screw pitch is 33.8 or 41.9 Angstroms depending on the structure. Interacts with the BMC major shell protein.

It localises to the bacterial microcompartment. Its pathway is amine and polyamine metabolism; choline degradation. Its function is as follows. A minor shell protein of the choline degradation-specific bacterial microcompartment (BMC). Proteins such as this one with circularly permuted BMC domains may play a key role in conferring heterogeneity and flexibility in this BMC. The polypeptide is Bacterial microcompartment shell protein CutR (Streptococcus intermedius (strain ATCC 27335 / DSM 20573 / CCUG 32759 / CIP 103248 / JCM 12996 / LMG 17840 / NCTC 11324 / SK54 / 1877)).